The primary structure comprises 357 residues: Carbamoyl phosphate synthase small chain (357 aa).

A CPSase region spans residues 1–168 (MSKRLLILED…STTTAYPSPN (168 aa)). L-glutamine contacts are provided by serine 46, glycine 220, and glycine 222. Positions 172–357 (KVVVVDFGLK…FMDLMDNFKK (186 aa)) constitute a Glutamine amidotransferase type-1 domain. Cysteine 247 functions as the Nucleophile in the catalytic mechanism. L-glutamine contacts are provided by leucine 248, glutamine 251, asparagine 289, glycine 291, and tyrosine 292. Catalysis depends on residues histidine 331 and aspartate 333.

It belongs to the CarA family. In terms of assembly, composed of two chains; the small (or glutamine) chain promotes the hydrolysis of glutamine to ammonia, which is used by the large (or ammonia) chain to synthesize carbamoyl phosphate. Tetramer of heterodimers (alpha,beta)4.

It catalyses the reaction hydrogencarbonate + L-glutamine + 2 ATP + H2O = carbamoyl phosphate + L-glutamate + 2 ADP + phosphate + 2 H(+). It carries out the reaction L-glutamine + H2O = L-glutamate + NH4(+). It participates in amino-acid biosynthesis; L-arginine biosynthesis; carbamoyl phosphate from bicarbonate: step 1/1. It functions in the pathway pyrimidine metabolism; UMP biosynthesis via de novo pathway; (S)-dihydroorotate from bicarbonate: step 1/3. Small subunit of the glutamine-dependent carbamoyl phosphate synthetase (CPSase). CPSase catalyzes the formation of carbamoyl phosphate from the ammonia moiety of glutamine, carbonate, and phosphate donated by ATP, constituting the first step of 2 biosynthetic pathways, one leading to arginine and/or urea and the other to pyrimidine nucleotides. The small subunit (glutamine amidotransferase) binds and cleaves glutamine to supply the large subunit with the substrate ammonia. The sequence is that of Carbamoyl phosphate synthase small chain from Lactococcus lactis subsp. lactis (strain IL1403) (Streptococcus lactis).